A 463-amino-acid polypeptide reads, in one-letter code: RuvB-like 2 (463 aa).

Ala-2 is subject to N-acetylalanine. Lys-9 participates in a covalent cross-link: Glycyl lysine isopeptide (Lys-Gly) (interchain with G-Cter in SUMO2). Residue 77–84 coordinates ATP; sequence GQPGTGKT. Ser-437 carries the post-translational modification Phosphoserine. Glycyl lysine isopeptide (Lys-Gly) (interchain with G-Cter in SUMO2) cross-links involve residues Lys-444 and Lys-456.

Belongs to the RuvB family. As to quaternary structure, forms homohexameric rings. Can form a dodecamer with RUVBL1 made of two stacked hexameric rings; however, even though RUVBL1 and RUVBL2 are present in equimolar ratio, the oligomeric status of each hexamer is not known. Oligomerization may regulate binding to nucleic acids and conversely, binding to nucleic acids may affect the dodecameric assembly. Interaction of the complex with DHX34 results in conformational changes of the N-terminus of the RUVBL2 subunits, resulting in loss of nucleotide binding ability and ATP hydrolysis of the complex. Interacts with the transcriptional activation domain of MYC. Interacts with ATF2. Component of the RNA polymerase II holoenzyme complex. May also act to bridge the LEF1/TCF1-CTNNB1 complex and TBP. Component of the NuA4 histone acetyltransferase complex which contains the catalytic subunit KAT5/TIP60 and the subunits EP400, TRRAP/PAF400, BRD8/SMAP, EPC1, DMAP1/DNMAP1, RUVBL1/TIP49, RUVBL2, ING3, actin, ACTL6A/BAF53A, MORF4L1/MRG15, MORF4L2/MRGX, MRGBP, YEATS4/GAS41, VPS72/YL1 and MEAF6. The NuA4 complex interacts with MYC and the adenovirus E1A protein. RUVBL2 interacts with EP400. Component of a NuA4-related complex which contains EP400, TRRAP/PAF400, SRCAP, BRD8/SMAP, EPC1, DMAP1/DNMAP1, RUVBL1/TIP49, RUVBL2, actin, ACTL6A/BAF53A, VPS72 and YEATS4/GAS41. Interacts with NPAT. Component of the chromatin-remodeling INO80 complex; specifically part of a complex module associated with the helicase ATP-binding and the helicase C-terminal domain of INO80. Component of some MLL1/MLL complex, at least composed of the core components KMT2A/MLL1, ASH2L, HCFC1/HCF1, WDR5 and RBBP5, as well as the facultative components BACC1, CHD8, E2F6, HSP70, INO80C, KANSL1, LAS1L, MAX, MCRS1, MGA, MYST1/MOF, PELP1, PHF20, PRP31, RING2, RUVB1/TIP49A, RUVB2/TIP49B, SENP3, TAF1, TAF4, TAF6, TAF7, TAF9 and TEX10. Interacts with IGHMBP2. Interacts with TELO2. Interacts with HINT1. Component of a SWR1-like complex. Component of the R2TP complex composed at least of RUVBL1, RUVBL2, RPAP3 and PIHD1. Component of the PAQosome complex which is responsible for the biogenesis of several protein complexes and which consists of R2TP complex members RUVBL1, RUVBL2, RPAP3 and PIH1D1, URI complex members PFDN2, PFDN6, PDRG1, UXT and URI1 as well as ASDURF, POLR2E and DNAAF10/WDR92. Interacts with ITFG1. Interacts with ZMYND10. Interacts with WAC; WAC positively regulates MTOR activity by promoting the assembly of the TTT complex composed of TELO2, TTI1 and TTI2 and the RUVBL complex composed of RUVBL1 and RUVBL2 into the TTT-RUVBL complex which leads to the dimerization of the mTORC1 complex and its subsequent activation. Forms a complex with APPL1 and APPL2. Interacts with ZNHIT2 (via HIT-type zinc finger) in the presence of ATP or ADP; shows a stronger interaction in the presence of ADP. The RUVBL1/RUVBL2 complex interacts with ZNHIT1 (via HIT-type zinc finger), ZNHIT3 (via HIT-type zinc finger), ZNHIT6 (via HIT-type zinc finger) and DDX59/ZNHIT5 (via HIT-type zinc finger) in the presence of ADP. Interacts with NOPCHAP1; the interaction is direct and disrupted upon ATP binding. Interacts with SMG1.

The protein resides in the nucleus matrix. It localises to the nucleus. Its subcellular location is the nucleoplasm. The protein localises to the cytoplasm. It is found in the membrane. The protein resides in the dynein axonemal particle. The enzyme catalyses ATP + H2O = ADP + phosphate + H(+). Its function is as follows. Possesses single-stranded DNA-stimulated ATPase and ATP-dependent DNA helicase (5' to 3') activity; hexamerization is thought to be critical for ATP hydrolysis and adjacent subunits in the ring-like structure contribute to the ATPase activity. Component of the NuA4 histone acetyltransferase complex which is involved in transcriptional activation of select genes principally by acetylation of nucleosomal histones H4 and H2A. This modification may both alter nucleosome-DNA interactions and promote interaction of the modified histones with other proteins which positively regulate transcription. This complex may be required for the activation of transcriptional programs associated with oncogene and proto-oncogene mediated growth induction, tumor suppressor mediated growth arrest and replicative senescence, apoptosis, and DNA repair. The NuA4 complex ATPase and helicase activities seem to be, at least in part, contributed by the association of RUVBL1 and RUVBL2 with EP400. NuA4 may also play a direct role in DNA repair when recruited to sites of DNA damage. Component of a SWR1-like complex that specifically mediates the removal of histone H2A.Z/H2AZ1 from the nucleosome. Proposed core component of the chromatin remodeling INO80 complex which exhibits DNA- and nucleosome-activated ATPase activity and catalyzes ATP-dependent nucleosome sliding. Plays an essential role in oncogenic transformation by MYC and also modulates transcriptional activation by the LEF1/TCF1-CTNNB1 complex. May also inhibit the transcriptional activity of ATF2. Involved in the endoplasmic reticulum (ER)-associated degradation (ERAD) pathway where it negatively regulates expression of ER stress response genes. May play a role in regulating the composition of the U5 snRNP complex. The sequence is that of RuvB-like 2 (RUVBL2) from Bos taurus (Bovine).